Here is a 272-residue protein sequence, read N- to C-terminus: Indole-3-glycerol phosphate synthase (272 aa).

Belongs to the TrpC family.

It catalyses the reaction 1-(2-carboxyphenylamino)-1-deoxy-D-ribulose 5-phosphate + H(+) = (1S,2R)-1-C-(indol-3-yl)glycerol 3-phosphate + CO2 + H2O. Its pathway is amino-acid biosynthesis; L-tryptophan biosynthesis; L-tryptophan from chorismate: step 4/5. The polypeptide is Indole-3-glycerol phosphate synthase (Mycolicibacterium vanbaalenii (strain DSM 7251 / JCM 13017 / BCRC 16820 / KCTC 9966 / NRRL B-24157 / PYR-1) (Mycobacterium vanbaalenii)).